A 269-amino-acid chain; its full sequence is Type 4 prepilin-like proteins leader peptide-processing enzyme (269 aa).

7 helical membrane-spanning segments follow: residues 13-33 (MPVLATVGGLIIGSFLNVVIW), 102-122 (YPLVELLTALAFLLASLVWPE), 124-144 (GWALAVMILSAWLIAASVIDL), 147-167 (QWLPDVFTQGVLWTGLIAAWA), 178-198 (VTGVLVGFIAFYSLRWIAGIV), 210-230 (LLFAALGSWVGPLSLPNVALI), and 249-269 (LPFGPCLSLGGIATIYLQALF).

This sequence belongs to the peptidase A24 family.

The protein localises to the cell inner membrane. The catalysed reaction is Typically cleaves a -Gly-|-Phe- bond to release an N-terminal, basic peptide of 5-8 residues from type IV prepilin, and then N-methylates the new N-terminal amino group, the methyl donor being S-adenosyl-L-methionine.. Its function is as follows. Cleaves type-4 fimbrial leader sequence and methylates the N-terminal (generally Phe) residue. This is Type 4 prepilin-like proteins leader peptide-processing enzyme from Escherichia coli O78:H11 (strain H10407 / ETEC).